The chain runs to 608 residues: Actin-related protein 8 (608 aa).

The tract at residues 1–20 (MQRSRASSTSSGRLQASQQV) is disordered. Residue 272-275 (DIGA) participates in ATP binding.

It belongs to the actin family. ARP8 subfamily. In terms of assembly, component of the chromatin remodeling Ino80 complex. Exists as monomers and dimers, but the dimer is most probably the biologically relevant form required for stable interactions with histones that exploits the twofold symmetry of the nucleosome core.

It is found in the nucleus. In terms of biological role, plays an important role in the functional organization of mitotic chromosomes. Exhibits low basal ATPase activity, and unable to polymerize. Functionally, proposed core component of the chromatin remodeling INO80 complex which is involved in transcriptional regulation, DNA replication and probably DNA repair. Strongly prefer nucleosomes and H3-H4 tetramers over H2A-H2B dimers, suggesting it may act as a nucleosome recognition module within the complex. The protein is Actin-related protein 8 of Drosophila pseudoobscura pseudoobscura (Fruit fly).